The sequence spans 1113 residues: Protein KIBRA (1113 aa).

2 consecutive WW domains span residues 6–39 (LPLP…DPRD) and 53–86 (DELP…DPRV). Coiled coils occupy residues 107-193 (LSAQ…RGFQ) and 293-431 (NSNN…SSMQ). Phosphoserine is present on serine 141. 2 disordered regions span residues 429-448 (SMQS…SRGS) and 522-547 (RSLS…SPPC). Positions 522–532 (RSLSGTPKSMT) are enriched in polar residues. Over residues 533 to 542 (SLSPRSSLSS) the composition is skewed to low complexity. A Phosphoserine modification is found at serine 535. Position 542 is a phosphoserine; by CDK1 (serine 542). Positions 658 to 781 (GATRIQIALK…RSGERSTRWY (124 aa)) constitute a C2 domain. Residues 825–975 (LEKRQEGRSS…RSVRMKRPSS (151 aa)) are disordered. The segment at 839–1113 (EDSWRYEETS…NIPALSADDV (275 aa)) is interaction with histone H3. The segment covering 847 to 870 (TSENEAVAEEEEEEVEEEEGEEDV) has biased composition (acidic residues). The residue at position 899 (serine 899) is a Phosphoserine. The residue at position 912 (threonine 912) is a Phosphothreonine. The span at 924–938 (IIRSKTFSPGPQSQY) shows a compositional bias: polar residues. Serine 927 is subject to Phosphoserine. Threonine 929 is modified (phosphothreonine). Serine 931 carries the post-translational modification Phosphoserine; by CDK1. Position 947 is a phosphoserine (serine 947). 2 interaction with PRKCZ regions span residues 953–996 (SKKP…LDLQ) and 956–975 (PPFV…RPSS). Residues serine 975 and serine 978 each carry the phosphoserine; by PKC/PRKCZ modification. Residues 1001 to 1032 (WHSQLTQEISVLKELKEQLEQAKSHGEKELPQ) adopt a coiled-coil conformation. The ADDV motif motif lies at 1111–1113 (DDV).

It belongs to the WWC family. KIBRA subfamily. Homodimer. Forms heterodimers with WWC2 and WWC3. Interacts with DDN. Interacts with DYNLL1 and histone H3. The interaction with DYNLL1 is mandatory for the recruitment and transactivation functions of ESR1 or DYNLL1 to the target chromatin and the interaction with histone H3 ensures proper regulatory interaction of WWC1-DYNLL1-ESR1 complexes with target chromatin. Interacts (via WW domains) with DDR1 (via PPxY motif) in a collagen-regulated manner. Interacts with PRKCZ (via the protein kinase domain). Forms a tripartite complex with DDR1 and PRKCZ, but predominantly in the absence of collagen. Interacts (via the ADDV motif) with PATJ (via PDZ domain 8). Interacts (via WW domains) with SYNPO (via PPxY motifs). Interacts with NF2 and SNX4. Interacts with DLC1 and PRKCZ. Interacts (via WW domains) with LATS1 and LATS2. Post-translationally, phosphorylation at Ser-542 and Ser-931 by CDK1 in response to spindle damage stress regulates mitotic exit, these two sites are dephosphorylated by CDC14B. As to expression, expressed in mammary epithelial cells and breast cancer cell lines. Found in the luminal epithelium surrounding the ducts in the normal breast. In the brain, expressed in somatodendritic compartment of neurons in the cortex and hippocampus and in the cerebellum it is found in the Purkinje cells and some granule cells (at protein level). Detected in brain, heart, colon and kidney. In the kidney, expressed in glomerular podocytes, in some tubules and in the collecting duct.

It localises to the cytoplasm. Its subcellular location is the perinuclear region. It is found in the nucleus. The protein localises to the cell projection. The protein resides in the ruffle membrane. It localises to the cytosol. In terms of biological role, regulator of the Hippo signaling pathway, also known as the Salvador-Warts-Hippo (SWH) pathway. Enhances phosphorylation of LATS1 and YAP1 and negatively regulates cell proliferation and organ growth due to a suppression of the transcriptional activity of YAP1, the major effector of the Hippo pathway. Along with NF2 can synergistically induce the phosphorylation of LATS1 and LATS2 and function in the regulation of Hippo signaling pathway. Acts as a transcriptional coactivator of ESR1 which plays an essential role in DYNLL1-mediated ESR1 transactivation. Regulates collagen-stimulated activation of the ERK/MAPK cascade. Modulates directional migration of podocytes. Plays a role in cognition and memory performance. Plays an important role in regulating AMPA-selective glutamate receptors (AMPARs) trafficking underlying synaptic plasticity and learning. This chain is Protein KIBRA, found in Homo sapiens (Human).